The chain runs to 119 residues: Large ribosomal subunit protein bL19 (119 aa).

This sequence belongs to the bacterial ribosomal protein bL19 family.

This protein is located at the 30S-50S ribosomal subunit interface and may play a role in the structure and function of the aminoacyl-tRNA binding site. This is Large ribosomal subunit protein bL19 from Photobacterium profundum (strain SS9).